The chain runs to 227 residues: Uracil-DNA glycosylase (227 aa).

Aspartate 68 functions as the Proton acceptor in the catalytic mechanism.

This sequence belongs to the uracil-DNA glycosylase (UDG) superfamily. UNG family.

The protein resides in the cytoplasm. The enzyme catalyses Hydrolyzes single-stranded DNA or mismatched double-stranded DNA and polynucleotides, releasing free uracil.. In terms of biological role, excises uracil residues from the DNA which can arise as a result of misincorporation of dUMP residues by DNA polymerase or due to deamination of cytosine. The sequence is that of Uracil-DNA glycosylase from Mycolicibacterium paratuberculosis (strain ATCC BAA-968 / K-10) (Mycobacterium paratuberculosis).